Here is a 30-residue protein sequence, read N- to C-terminus: Circulin A (30 aa).

Positions 1–30 form a cross-link, cyclopeptide (Gly-Asn); sequence GIPCGESCVWIPCISAALGCSCKNKVCYRN. Cystine bridges form between cysteine 4/cysteine 20, cysteine 8/cysteine 22, and cysteine 13/cysteine 27.

Post-translationally, this is a cyclic peptide. In terms of tissue distribution, expressed in fruit, pedicel, root and stem but not in leaf (at protein level).

Its function is as follows. Probably participates in a plant defense mechanism. The sequence is that of Circulin A from Chassalia chartacea (Chassalia curviflora).